Consider the following 341-residue polypeptide: Phosphoribosylformylglycinamidine cyclo-ligase (341 aa).

The protein belongs to the AIR synthase family.

It localises to the cytoplasm. The enzyme catalyses 2-formamido-N(1)-(5-O-phospho-beta-D-ribosyl)acetamidine + ATP = 5-amino-1-(5-phospho-beta-D-ribosyl)imidazole + ADP + phosphate + H(+). It participates in purine metabolism; IMP biosynthesis via de novo pathway; 5-amino-1-(5-phospho-D-ribosyl)imidazole from N(2)-formyl-N(1)-(5-phospho-D-ribosyl)glycinamide: step 2/2. This Picosynechococcus sp. (strain ATCC 27264 / PCC 7002 / PR-6) (Agmenellum quadruplicatum) protein is Phosphoribosylformylglycinamidine cyclo-ligase.